The following is a 1008-amino-acid chain: ATP-dependent zinc metalloprotease FTSH 12, chloroplastic (1008 aa).

Residues 1-49 constitute a chloroplast transit peptide; sequence MEIAISYKPNPLISSSTQLLKRSKSFGLVRFPAKYGLGATRKKQLFRVY. The next 2 membrane-spanning stretches (helical) occupy residues 154–174 and 427–447; these read AALFIYAFALLLSCQRVYVAI and IHYFMKVFIALLPGILILWFI. 533 to 540 contacts ATP; sequence GPPGTGKT. His-769 contacts Zn(2+). Residue Glu-770 is part of the active site. Positions 773 and 849 each coordinate Zn(2+).

This sequence in the N-terminal section; belongs to the AAA ATPase family. The protein in the C-terminal section; belongs to the peptidase M41 family. The cofactor is Zn(2+).

It localises to the plastid. It is found in the chloroplast thylakoid membrane. In terms of biological role, probable ATP-dependent zinc metallopeptidase. In Arabidopsis thaliana (Mouse-ear cress), this protein is ATP-dependent zinc metalloprotease FTSH 12, chloroplastic (FTSH12).